We begin with the raw amino-acid sequence, 249 residues long: Probable septum site-determining protein MinC (249 aa).

The disordered stretch occupies residues 116-149; sequence AAVSPPPPPPPPPARAEPAAPVARPAPGRMQRNA. Positions 119–130 are enriched in pro residues; sequence SPPPPPPPPPAR. The segment covering 131 to 142 has biased composition (low complexity); the sequence is AEPAAPVARPAP.

This sequence belongs to the MinC family. As to quaternary structure, interacts with MinD and FtsZ.

Functionally, cell division inhibitor that blocks the formation of polar Z ring septums. Rapidly oscillates between the poles of the cell to destabilize FtsZ filaments that have formed before they mature into polar Z rings. Prevents FtsZ polymerization. In Xanthomonas campestris pv. campestris (strain B100), this protein is Probable septum site-determining protein MinC.